Here is a 255-residue protein sequence, read N- to C-terminus: Alkaline ceramidase (255 aa).

Residues 1–28 (MADGISSFWGPVTSTIECCEMNYAYSSY) are Lumenal-facing. The helical transmembrane segment at 29-49 (IAEFYNTISNVPGILLALIGL) threads the bilayer. Residues 50 to 60 (VNALRQRFEKR) are Cytoplasmic-facing. A helical transmembrane segment spans residues 61-81 (FSILHISNMILAIGSMLYHAT). Residue His-79 coordinates Zn(2+). Over 82-91 (LQHVQQQSDE) the chain is Lumenal. The chain crosses the membrane as a helical span at residues 92 to 112 (TPMVWEILLYMYILYSPDWHY). Residues 113 to 118 (RSTMPT) are Cytoplasmic-facing. 2 helical membrane-spanning segments follow: residues 119-139 (FLFL…FGIG) and 140-160 (FKVH…KYYI). Residues 161–169 (HTEDTAAKR) are Cytoplasmic-facing. The chain crosses the membrane as a helical span at residues 170 to 192 (IAKWYVATILVGSICWFCDRVFC). The Lumenal portion of the chain corresponds to 193 to 205 (KTISQWPVNPQGH). Residues His-205 and His-209 each contribute to the Zn(2+) site. A helical transmembrane segment spans residues 206–226 (ALWHVFMSFNSYCANTFLMFC). Over 227–255 (RAQQRGWNPKVKYFLGVLPYVKIEKPKTQ) the chain is Cytoplasmic.

Belongs to the alkaline ceramidase family. Requires Zn(2+) as cofactor. In terms of tissue distribution, mostly expressed in roots, shoot meristems and pollen, and, to a lower extent, in mature leaves.

It localises to the endoplasmic reticulum membrane. Its subcellular location is the golgi apparatus membrane. Its function is as follows. Hydrolyzes only phytoceramide into phytosphingosine and free fatty acid. Does not have reverse activity. Affects plant morphogenesis. Required for the formation of wax layer that ensure cuticle permeability. Implicated in abscisic acid (ABA)-mediated stomatal closure. Involved in both biotic and abiotic stresses. Promotes salt resistance and defenses responses toward pathogenic bacteria (e.g. P.syringae) and against the fungal toxin fumonisin B1 (FB1). The polypeptide is Alkaline ceramidase (Arabidopsis thaliana (Mouse-ear cress)).